We begin with the raw amino-acid sequence, 510 residues long: Light-independent protochlorophyllide reductase subunit B (510 aa).

Asp-36 serves as a coordination point for [4Fe-4S] cluster. The active-site Proton donor is the Asp-297. Position 432 to 433 (432 to 433 (GM)) interacts with substrate.

Belongs to the ChlB/BchB/BchZ family. In terms of assembly, protochlorophyllide reductase is composed of three subunits; ChlL, ChlN and ChlB. Forms a heterotetramer of two ChlB and two ChlN subunits. The cofactor is [4Fe-4S] cluster.

Its subcellular location is the plastid. It localises to the chloroplast. It carries out the reaction chlorophyllide a + oxidized 2[4Fe-4S]-[ferredoxin] + 2 ADP + 2 phosphate = protochlorophyllide a + reduced 2[4Fe-4S]-[ferredoxin] + 2 ATP + 2 H2O. It participates in porphyrin-containing compound metabolism; chlorophyll biosynthesis (light-independent). Component of the dark-operative protochlorophyllide reductase (DPOR) that uses Mg-ATP and reduced ferredoxin to reduce ring D of protochlorophyllide (Pchlide) to form chlorophyllide a (Chlide). This reaction is light-independent. The NB-protein (ChlN-ChlB) is the catalytic component of the complex. The sequence is that of Light-independent protochlorophyllide reductase subunit B from Pinus koraiensis (Korean pine).